We begin with the raw amino-acid sequence, 62 residues long: Photosystem II reaction center protein Z (62 aa).

2 helical membrane passes run 8–28 (ALFA…VVLA) and 41–61 (FSGI…NSFV).

Belongs to the PsbZ family. In terms of assembly, PSII is composed of 1 copy each of membrane proteins PsbA, PsbB, PsbC, PsbD, PsbE, PsbF, PsbH, PsbI, PsbJ, PsbK, PsbL, PsbM, PsbT, PsbY, PsbZ, Psb30/Ycf12, at least 3 peripheral proteins of the oxygen-evolving complex and a large number of cofactors. It forms dimeric complexes.

The protein resides in the plastid. The protein localises to the chloroplast thylakoid membrane. May control the interaction of photosystem II (PSII) cores with the light-harvesting antenna, regulates electron flow through the 2 photosystem reaction centers. PSII is a light-driven water plastoquinone oxidoreductase, using light energy to abstract electrons from H(2)O, generating a proton gradient subsequently used for ATP formation. This Chlorella vulgaris (Green alga) protein is Photosystem II reaction center protein Z.